The following is a 464-amino-acid chain: Glycine--tRNA ligase (464 aa).

Residues R104 and E175 each contribute to the substrate site. ATP is bound by residues 207-209, 217-222, 292-293, and 336-339; these read RNE, FRTREF, EL, and GVNR. Position 222-226 (222-226) interacts with substrate; it reads FEQME. Substrate is bound at residue 332–336; it reads EPALG.

It belongs to the class-II aminoacyl-tRNA synthetase family. As to quaternary structure, homodimer.

Its subcellular location is the cytoplasm. It carries out the reaction tRNA(Gly) + glycine + ATP = glycyl-tRNA(Gly) + AMP + diphosphate. Catalyzes the attachment of glycine to tRNA(Gly). The protein is Glycine--tRNA ligase of Leptospira interrogans serogroup Icterohaemorrhagiae serovar copenhageni (strain Fiocruz L1-130).